Here is a 171-residue protein sequence, read N- to C-terminus: MEPSPALAWLLLLSLVADCLKAAQSRDFTVKDIIYLHPSTTPYPGGFKCFTCEKAADNYECNRWAPDIYCPRDTRYCYTQHTMEVTGNSISVTKRCVPLEECLSTGCRDSEHEGYKICTSCCEGNICNLPLPRNETDATFATTSPINQTNGHPHCVSVIVSCLWVWLGLTL.

Positions 1–25 are cleaved as a signal peptide; it reads MEPSPALAWLLLLSLVADCLKAAQS. Residues 47 to 141 enclose the UPAR/Ly6 domain; that stretch reads FKCFTCEKAA…PRNETDATFA (95 aa). Disulfide bonds link C49/C77, C52/C61, C70/C96, C102/C121, C107/C118, and C122/C127. The NxI motif motif lies at 88-90; that stretch reads NSI. N-linked (GlcNAc...) asparagine glycosylation is found at N134 and N147. N147 is lipidated: GPI-anchor amidated asparagine. Positions 148-171 are cleaved as a propeptide — removed in mature form; it reads QTNGHPHCVSVIVSCLWVWLGLTL.

In terms of assembly, interacts with nicotinic acetylcholine receptors (nAChRs) including CHRNA3, CHRNA4, CHRNA5, CHRNA6, CHRNA7, CHRNB2 and CHRNB4. Interacts (via NxI motif) with LRP6. Detected in the frontal cortex and hippocampus (at protein level). Highly expressed in the brain and spinal cord, as well as dorsal root and trigeminal ganglia.

The protein localises to the secreted. It is found in the cytoplasm. The protein resides in the cell membrane. It localises to the synapse. Its subcellular location is the synaptosome. The protein localises to the membrane raft. It is found in the cell projection. The protein resides in the dendrite. It localises to the perikaryon. Its function is as follows. Acts as a modulator of nicotinic acetylcholine receptors (nAChRs) function in the brain. Inhibits nicotine-induced Ca(2+) influx through nAChRs. In vitro, specifically inhibits alpha-3:beta-4 and alpha-7 nAChR currents in an allosteric manner. Acts as a positive regulator of Wnt/beta-catenin signaling. The polypeptide is Ly6/PLAUR domain-containing protein 6 (Lypd6) (Mus musculus (Mouse)).